We begin with the raw amino-acid sequence, 131 residues long: Hyastatin (131 aa).

Positions 1-16 are cleaved as a signal peptide; that stretch reads MRVLLILVSLAALAHA. 3 cysteine pairs are disulfide-bonded: Cys-103–Cys-117, Cys-107–Cys-124, and Cys-118–Cys-125. Lysine amide is present on Lys-130.

As to expression, strongly expressed in hemocytes, with weaker expression in gills and epidermis. Expressed at low levels in hepatopancreas.

Its subcellular location is the cytoplasmic granule. In terms of biological role, antimicrobial peptide. Has strong antibacterial activity against the Gram-positive bacterium C.glutamicum (MIC=0.4 uM) and the Gram-negative bacterium E.coli (MIC=12.5 uM). Has weak antibacterial activity against the Gram-positive bacterium S.aureus (MIC&gt;50 uM) and the Gram-negative bacterium P.aeruginosa (MIC&gt;50 uM). Has antifungal activity against S.cerevisiae (MIC=12.5) and C.albicans (MIC=6.3 uM). Has weak antifungal activity against the mold B.cinerea. Presents chitin-binding activity. This is Hyastatin from Hyas araneus (Atlantic lyre crab).